Consider the following 474-residue polypeptide: Glutamate--tRNA ligase (474 aa).

The 'HIGH' region motif lies at 9-19 (PSPTGYLHVGG). Positions 240 to 244 (KLSKR) match the 'KMSKS' region motif. Residue Lys243 participates in ATP binding.

It belongs to the class-I aminoacyl-tRNA synthetase family. Glutamate--tRNA ligase type 1 subfamily. As to quaternary structure, monomer.

The protein localises to the cytoplasm. It carries out the reaction tRNA(Glu) + L-glutamate + ATP = L-glutamyl-tRNA(Glu) + AMP + diphosphate. Functionally, catalyzes the attachment of glutamate to tRNA(Glu) in a two-step reaction: glutamate is first activated by ATP to form Glu-AMP and then transferred to the acceptor end of tRNA(Glu). The sequence is that of Glutamate--tRNA ligase from Vibrio vulnificus (strain YJ016).